The primary structure comprises 230 residues: MPEGGLIVAVDGPSGAGKSTVCRRIASMLGAKYLDTGAMYRVATLHVLRQGINPSDTTAVVQATRELPLSVNDDPASREVILDGEDVSNEIRGRLVTQNVSAVAAILEVRENLVALQRELAATAHRCVVDGRDIGSTVLVDAPVKIFLTASAEVRAQRRYDQDVAAGRLTDLATVLADVKRRDELDSNRSVSPLAPASDATVVDTSTLTLDQVVDTLMTLIEKSAERTAR.

12-20 (GPSGAGKST) serves as a coordination point for ATP.

Belongs to the cytidylate kinase family. Type 1 subfamily.

It localises to the cytoplasm. The enzyme catalyses CMP + ATP = CDP + ADP. It carries out the reaction dCMP + ATP = dCDP + ADP. In Corynebacterium diphtheriae (strain ATCC 700971 / NCTC 13129 / Biotype gravis), this protein is Cytidylate kinase.